The sequence spans 756 residues: Alpha-1,2-mannosyltransferase MNN26 (756 aa).

The Cytoplasmic segment spans residues 1–10 (MSLRRLSPSH). The chain crosses the membrane as a helical span at residues 11–31 (LILGTLVLGVIIFNLYVLTST). The Extracellular portion of the chain corresponds to 32 to 756 (HEDIKKVKGP…NGKNKQGAAS (725 aa)). Residues 723 to 734 (LGEKSQPKQPEI) are compositionally biased toward polar residues. The interval 723–756 (LGEKSQPKQPEINNNNNNNNNDDDNGKNKQGAAS) is disordered.

Belongs to the MNN1/MNT family.

Its subcellular location is the golgi apparatus membrane. It participates in protein modification; protein glycosylation. Functionally, alpha-1,2-mannosyltransferase required for cell wall integrity. Responsible for addition of the first alpha-1,2-linked mannose to form the branches on the mannan backbone of oligosaccharides. Addition of alpha-1,2-mannose is required for stabilization of the alpha-1,6-mannose backbone and hence regulates mannan fibril length; and is important for both immune recognition and virulence. In Candida albicans (strain SC5314 / ATCC MYA-2876) (Yeast), this protein is Alpha-1,2-mannosyltransferase MNN26 (MNN26).